The primary structure comprises 1169 residues: Translation initiation factor IF-2 (1169 aa).

Disordered stretches follow at residues 69-108 (IKAKNENPKNNDNKNNKNFSNPSHPEKLSKEGLNKKPLLI) and 139-568 (ALSK…LRAA). Composition is skewed to basic and acidic residues over residues 71 to 83 (AKNENPKNNDNKN) and 92 to 102 (HPEKLSKEGLN). Polar residues predominate over residues 139-156 (ALSKNQNKTNTSVITTPN). The span at 157–171 (LKDKKNPSALQDKKP) shows a compositional bias: basic and acidic residues. The segment covering 196-214 (NLANSNRNINANKINNSVN) has biased composition (low complexity). Residues 231-248 (ADNNNFPKKNLNSPNVKS) are compositionally biased toward polar residues. Residues 265-281 (NTNRPNSNSRQPSSNTQ) are compositionally biased toward low complexity. Composition is skewed to polar residues over residues 282-294 (ISANRPGGQNRQG), 412-432 (MQLQKTNASNKEKPNISNVNK), and 439-455 (NQKTKAPNSRLNTSPSP). The span at 472-486 (GRTDWDDSAKLEALR) shows a compositional bias: basic and acidic residues. The segment covering 544–560 (KQFKKKKKETTRQRQKR) has biased composition (basic residues). The 178-residue stretch at 661–838 (KRPPVITVMG…EVEDLQANPE (178 aa)) folds into the tr-type G domain. The tract at residues 670–677 (GHVDHGKT) is G1. 670 to 677 (GHVDHGKT) is a binding site for GTP. The G2 stretch occupies residues 695 to 699 (GITQH). A G3 region spans residues 720 to 723 (DTPG). GTP-binding positions include 720–724 (DTPGH) and 774–777 (NKID). The tract at residues 774 to 777 (NKID) is G4. The tract at residues 810 to 812 (SAI) is G5.

This sequence belongs to the TRAFAC class translation factor GTPase superfamily. Classic translation factor GTPase family. IF-2 subfamily.

It localises to the cytoplasm. In terms of biological role, one of the essential components for the initiation of protein synthesis. Protects formylmethionyl-tRNA from spontaneous hydrolysis and promotes its binding to the 30S ribosomal subunits. Also involved in the hydrolysis of GTP during the formation of the 70S ribosomal complex. The chain is Translation initiation factor IF-2 from Prochlorococcus marinus subsp. pastoris (strain CCMP1986 / NIES-2087 / MED4).